Here is a 242-residue protein sequence, read N- to C-terminus: Enolase-phosphatase E1 (242 aa).

Belongs to the HAD-like hydrolase superfamily. MasA/MtnC family. In terms of assembly, monomer. Requires Mg(2+) as cofactor.

It carries out the reaction 5-methylsulfanyl-2,3-dioxopentyl phosphate + H2O = 1,2-dihydroxy-5-(methylsulfanyl)pent-1-en-3-one + phosphate. Its pathway is amino-acid biosynthesis; L-methionine biosynthesis via salvage pathway; L-methionine from S-methyl-5-thio-alpha-D-ribose 1-phosphate: step 3/6. It participates in amino-acid biosynthesis; L-methionine biosynthesis via salvage pathway; L-methionine from S-methyl-5-thio-alpha-D-ribose 1-phosphate: step 4/6. Functionally, bifunctional enzyme that catalyzes the enolization of 2,3-diketo-5-methylthiopentyl-1-phosphate (DK-MTP-1-P) into the intermediate 2-hydroxy-3-keto-5-methylthiopentenyl-1-phosphate (HK-MTPenyl-1-P), which is then dephosphorylated to form the acireductone 1,2-dihydroxy-3-keto-5-methylthiopentene (DHK-MTPene). This chain is Enolase-phosphatase E1, found in Synechococcus sp. (strain WH7803).